A 509-amino-acid polypeptide reads, in one-letter code: Maturase K (509 aa).

The protein belongs to the intron maturase 2 family. MatK subfamily.

It localises to the plastid. The protein localises to the chloroplast. Usually encoded in the trnK tRNA gene intron. Probably assists in splicing its own and other chloroplast group II introns. This is Maturase K from Stylosanthes hamata (Caribbean stylo).